The following is a 432-amino-acid chain: PC-esterase domain-containing protein 1B (432 aa).

2 disordered regions span residues 273–312 and 407–432; these read WESS…SPGL and GPYM…SRPQ. Over residues 285–294 the composition is skewed to polar residues; the sequence is QDNIGPQFAQ. Residues 296–312 are compositionally biased toward pro residues; that stretch reads PPYPFPRPPPLLPSPGL.

The protein belongs to the PC-esterase family.

The protein is PC-esterase domain-containing protein 1B (Pced1b) of Rattus norvegicus (Rat).